The chain runs to 125 residues: Small ribosomal subunit protein uS13 (125 aa).

Belongs to the universal ribosomal protein uS13 family. As to quaternary structure, part of the 30S ribosomal subunit. Forms a loose heterodimer with protein S19. Forms two bridges to the 50S subunit in the 70S ribosome.

Its function is as follows. Located at the top of the head of the 30S subunit, it contacts several helices of the 16S rRNA. In the 70S ribosome it contacts the 23S rRNA (bridge B1a) and protein L5 of the 50S subunit (bridge B1b), connecting the 2 subunits; these bridges are implicated in subunit movement. Contacts the tRNAs in the A and P-sites. The protein is Small ribosomal subunit protein uS13 of Rickettsia africae (strain ESF-5).